A 629-amino-acid polypeptide reads, in one-letter code: Replication protein A 70 kDa DNA-binding subunit D (629 aa).

The tract at residues 112–135 is disordered; it reads LDSKSGEEEAREPKKQKLEHSPVS. A compositionally biased stretch (basic and acidic residues) spans 115 to 131; sequence KSGEEEAREPKKQKLEH. Residues 194-280 constitute a DNA-binding region (OB); that stretch reads WTIKVRVTNK…QNDYEMTLNE (87 aa). Residues 492-512 form a C4-type zinc finger; sequence CKTCNKKVTEALDSGYWCEGC.

Belongs to the replication factor A protein 1 family. As to quaternary structure, heterotrimer of RPA1, RPA2 and RPA3 (canonical replication protein A complex).

The protein localises to the nucleus. Component of the replication protein A complex (RPA) required for DNA recombination, repair and replication. The activity of RPA is mediated by single-stranded DNA binding and protein interactions. Probably involved in repair of double-strand DNA breaks (DSBs) induced by genotoxic stresses. This is Replication protein A 70 kDa DNA-binding subunit D (RPA1D) from Arabidopsis thaliana (Mouse-ear cress).